We begin with the raw amino-acid sequence, 209 residues long: Uracil phosphoribosyltransferase (209 aa).

5-phospho-alpha-D-ribose 1-diphosphate contacts are provided by residues arginine 79, arginine 104, and 131 to 139 (DPMLATGGS). Residues isoleucine 194 and 199 to 201 (GDA) each bind uracil. 5-phospho-alpha-D-ribose 1-diphosphate is bound at residue aspartate 200.

Belongs to the UPRTase family. Mg(2+) is required as a cofactor.

It carries out the reaction UMP + diphosphate = 5-phospho-alpha-D-ribose 1-diphosphate + uracil. The protein operates within pyrimidine metabolism; UMP biosynthesis via salvage pathway; UMP from uracil: step 1/1. Allosterically activated by GTP. Functionally, catalyzes the conversion of uracil and 5-phospho-alpha-D-ribose 1-diphosphate (PRPP) to UMP and diphosphate. The polypeptide is Uracil phosphoribosyltransferase (Bacillus licheniformis (strain ATCC 14580 / DSM 13 / JCM 2505 / CCUG 7422 / NBRC 12200 / NCIMB 9375 / NCTC 10341 / NRRL NRS-1264 / Gibson 46)).